We begin with the raw amino-acid sequence, 94 residues long: Probable Fe(2+)-trafficking protein (94 aa).

The protein belongs to the Fe(2+)-trafficking protein family.

Functionally, could be a mediator in iron transactions between iron acquisition and iron-requiring processes, such as synthesis and/or repair of Fe-S clusters in biosynthetic enzymes. In Marinomonas sp. (strain MWYL1), this protein is Probable Fe(2+)-trafficking protein.